The primary structure comprises 143 residues: Photosystem I reaction center subunit IV A, chloroplastic (143 aa).

Residues 1–44 constitute a chloroplast transit peptide; the sequence is MAMTTASTVFVLPANVTSVAGASSSRSSVSFLPMRNAGSRLVVR. Positions 43 to 85 are disordered; it reads VRAAEDPAPASSSSKDSPAAAAAPDGATATKPKPPPIGPKRGS. Residues 48 to 73 are compositionally biased toward low complexity; the sequence is DPAPASSSSKDSPAAAAAPDGATATK.

It belongs to the PsaE family. In terms of processing, 2 isoforms may exist. With or without the N-terminal alanine.

Its subcellular location is the plastid. It localises to the chloroplast thylakoid membrane. Stabilizes the interaction between PsaC and the PSI core, assists the docking of the ferredoxin to PSI and interacts with ferredoxin-NADP oxidoreductase. The protein is Photosystem I reaction center subunit IV A, chloroplastic (PSAE1) of Arabidopsis thaliana (Mouse-ear cress).